The following is a 653-amino-acid chain: Laccase ustL (653 aa).

A signal peptide spans 1–20 (MTSLTGLALLLCVLASQSWA). 2 Plastocyanin-like domains span residues 31-143 (WEKG…RPKR) and 173-362 (VLSD…ATQV). N-linked (GlcNAc...) asparagine glycans are attached at residues asparagine 74, asparagine 220, asparagine 235, asparagine 255, asparagine 277, asparagine 405, asparagine 463, and asparagine 479. One can recognise a Plastocyanin-like 3 domain in the interval 463-594 (NQTVGTEDEK…GGMSIALLDG (132 aa)). Positions 501, 504, 506, 576, 577, 578, and 582 each coordinate Cu cation. Asparagine 623 carries N-linked (GlcNAc...) asparagine glycosylation.

The protein belongs to the multicopper oxidase family.

The enzyme catalyses 4 norrubrofusarin + O2 = 2 ustilaginoidin A + 2 H2O. Its pathway is secondary metabolite biosynthesis. Functionally, laccase; part of the gene cluster that mediates the biosynthesis of ustilaginoidins, dimeric gamma-naphthopyrones isolated from different fungal species. The first step in the biosynthesis of ustilaginoidins is the production of gamma-naphthopyrone precursor YWA1 by the non-reducing polyketide synthase ustP, via condensation of one acetyl-CoA starter unit with 6 malonyl-CoA units. YWA1 is then probably substrate of the ustZ to yield norrubrofusarin via a dehydration reaction. A key enzyme in the biosynthetic pathway is the laccase ustL, which catalyzes the oxidative dimerization of norrubrofusarin to ustilaginoidin A. It can produce the M- and P-atropisomers in varying amounts, depending on the reaction conditions. For the biosynthesis of 3-methylustilaginoid in derivatives such as chaetochromin A, a methylated derivative of YWA1 is required. The C-methylation is considered to be catalyzed by ustM, the phosphopantetheine attachment site of which indicates that it acts on the growing polyketide chain before release of the product. For the biosynthesis of chaetochromin A, it is assumed that saturation of the D2 double bond takes place before dimerization, and is probably catalyzed by an external reductase because no candidate gene was identified within the cluster. The chain is Laccase ustL from Ustilaginoidea virens (Rice false smut fungus).